Consider the following 156-residue polypeptide: Endoribonuclease YbeY (156 aa).

Residues H122, H126, and H132 each coordinate Zn(2+).

This sequence belongs to the endoribonuclease YbeY family. It depends on Zn(2+) as a cofactor.

It localises to the cytoplasm. Single strand-specific metallo-endoribonuclease involved in late-stage 70S ribosome quality control and in maturation of the 3' terminus of the 16S rRNA. This chain is Endoribonuclease YbeY, found in Bacillus mycoides (strain KBAB4) (Bacillus weihenstephanensis).